A 905-amino-acid polypeptide reads, in one-letter code: MATPSMLPQWSYMHIAGQDAAEYLSPALVQFAQATSSYFKLDNKFRNPTVAPTHDVTTERSQRLQLRFVPVMQEDGQYTYKTRFQLAVGDNRVLDMASTYFDIRGTLDRGPSFKPYSGTAYNALAPRAGANNCLFNGSGANINTLAQVPFAGAITVNGQAAVTDNTYQPEPQLGPESWVDGTLADLGDASGRALKASTPRMPCYGSYAPPTNENGGQATGAVERRFYKVTANNNNEADALLYTEDVNLQTPDTHLVHQVSDDQVTGVQGLGQQAAPNRPNYIGFRDNFIGLMYYNSNGNLGVLAGQSSQLNAVVDLQDRNTELSYQLLLDALTDRSRYFSMWNQAVDSYDQDVRIIDNHGVEDDMPNYCFPLSGMGPLTNMTAMKVNNQNFQTDNTNVGPIQKIGFGNVEAMEINLNANLFKGFLYSNVALYLPDAYKYTPDNIVAPANANTYAYMNVRLPAANLIDTFVNIGARWSPDVMDSVNPFNHHRNAGLRYRSQLLGNGRYCSFHIQVPQKFFAIKNLLLLPGTYTYEWSFRKDVNMILQSSLGNDLRVDGASINIQSINLYASFFPMAHNTASTLEAMLRNDVNDQSFADYLSAANMLYPIPANTTNLPISIPARNWAGFRGWSFTRIKQRETPALGSPYDPYFTYSGSIPYLDSTFYLSHTFRRVSIMFDSSVSWPGNDRLLTPNEFEIKRYVDGEGYNVAQSNMTKDWFLVQMLAHYNIGYQGYHLPESYKDRMYSFLRNFEPMCRQLVDVTNYATYQSVTVGHQHNNSGYASPLSTFNPREGHPYPANWPYPLIGVNAVPTVTQKKFLCDRTLWRIPFSSNFMSMGTLTDLGQNLLYSNSAHALDMTFEVDAMNEPTLLYVLFEVFDVARVHQPHRGVIEVVYLRTPFSAGNATT.

N-acetylalanine; by host is present on alanine 2. Residue tyrosine 893 is modified to Phosphotyrosine; by host.

It belongs to the adenoviridae hexon protein family. As to quaternary structure, homotrimer. Interacts with the capsid vertex protein; this interaction binds the peripentonal hexons to the neighboring penton base. Interacts with the hexon-linking protein; this interaction tethers the hexons surrounding the penton to those situated in the central plate of the facet. Interacts with the hexon-interlacing protein; this interaction lashes the hexons together. Interacts with host dyneins DYNC1LI1 and DYNC1I2; this interaction might be involved in intracellular microtubule-dependent transport of incoming viral capsid. Interacts with the shutoff protein; this interaction allows folding and formation of hexons trimers. Interacts with pre-protein VI; this interaction probably allows nuclear import of hexon trimers and possibly pre-capsid assembly.

The protein localises to the virion. The protein resides in the host nucleus. In terms of biological role, major capsid protein that self-associates to form 240 hexon trimers, each in the shape of a hexagon, building most of the pseudo T=25 capsid. Assembled into trimeric units with the help of the chaperone shutoff protein. Transported by pre-protein VI to the nucleus where it associates with other structural proteins to form an empty capsid. Might be involved, through its interaction with host dyneins, in the intracellular microtubule-dependent transport of incoming viral capsid to the nucleus. This chain is Hexon protein, found in Canis lupus familiaris (Dog).